We begin with the raw amino-acid sequence, 309 residues long: Probable 4-hydroxy-2-oxoglutarate aldolase, mitochondrial (309 aa).

49–50 (SN) lines the substrate pocket. The active-site Schiff-base intermediate with substrate is the Lys173.

Belongs to the DapA family.

The enzyme catalyses (4S)-4-hydroxy-2-oxoglutarate = glyoxylate + pyruvate. It catalyses the reaction (4R)-4-hydroxy-2-oxoglutarate = glyoxylate + pyruvate. Its activity is regulated as follows. Inhibited by divalent cations. Catalyzes the final step in the metabolic pathway of hydroxyproline. Involved in osmoadaptation. The chain is Probable 4-hydroxy-2-oxoglutarate aldolase, mitochondrial from Emericella nidulans (strain FGSC A4 / ATCC 38163 / CBS 112.46 / NRRL 194 / M139) (Aspergillus nidulans).